A 244-amino-acid chain; its full sequence is UDP-2,3-diacylglucosamine hydrolase (244 aa).

The Mn(2+) site is built by Asp-8, His-10, Asp-41, Asn-79, and His-114. Substrate is bound at residue 79 to 80; the sequence is NR. The substrate site is built by Asp-122, Ser-160, Asn-164, Lys-167, and His-195. The Mn(2+) site is built by His-195 and His-197.

Belongs to the LpxH family. The cofactor is Mn(2+).

The protein resides in the cell inner membrane. It catalyses the reaction UDP-2-N,3-O-bis[(3R)-3-hydroxytetradecanoyl]-alpha-D-glucosamine + H2O = 2-N,3-O-bis[(3R)-3-hydroxytetradecanoyl]-alpha-D-glucosaminyl 1-phosphate + UMP + 2 H(+). The protein operates within glycolipid biosynthesis; lipid IV(A) biosynthesis; lipid IV(A) from (3R)-3-hydroxytetradecanoyl-[acyl-carrier-protein] and UDP-N-acetyl-alpha-D-glucosamine: step 4/6. In terms of biological role, hydrolyzes the pyrophosphate bond of UDP-2,3-diacylglucosamine to yield 2,3-diacylglucosamine 1-phosphate (lipid X) and UMP by catalyzing the attack of water at the alpha-P atom. Involved in the biosynthesis of lipid A, a phosphorylated glycolipid that anchors the lipopolysaccharide to the outer membrane of the cell. This is UDP-2,3-diacylglucosamine hydrolase from Hahella chejuensis (strain KCTC 2396).